The chain runs to 79 residues: uncharacterized protein (79 aa).

Positions 1–37 (MQLDVFSRMMFGDAAKPTEEKEEEQQEEVSQVSQTND) are disordered.

This is an uncharacterized protein from Bacillus subtilis (strain 168).